A 437-amino-acid chain; its full sequence is 3-phosphoshikimate 1-carboxyvinyltransferase (437 aa).

3 residues coordinate 3-phosphoshikimate: lysine 22, serine 23, and arginine 27. Lysine 22 provides a ligand contact to phosphoenolpyruvate. Phosphoenolpyruvate contacts are provided by glycine 96 and arginine 125. Residues serine 170, glutamine 172, aspartate 323, and lysine 350 each contribute to the 3-phosphoshikimate site. Glutamine 172 contacts phosphoenolpyruvate. Aspartate 323 (proton acceptor) is an active-site residue. Phosphoenolpyruvate is bound by residues arginine 354 and arginine 396.

This sequence belongs to the EPSP synthase family. Monomer.

It is found in the cytoplasm. It carries out the reaction 3-phosphoshikimate + phosphoenolpyruvate = 5-O-(1-carboxyvinyl)-3-phosphoshikimate + phosphate. The protein operates within metabolic intermediate biosynthesis; chorismate biosynthesis; chorismate from D-erythrose 4-phosphate and phosphoenolpyruvate: step 6/7. In terms of biological role, catalyzes the transfer of the enolpyruvyl moiety of phosphoenolpyruvate (PEP) to the 5-hydroxyl of shikimate-3-phosphate (S3P) to produce enolpyruvyl shikimate-3-phosphate and inorganic phosphate. In Synechococcus sp. (strain RCC307), this protein is 3-phosphoshikimate 1-carboxyvinyltransferase.